The chain runs to 148 residues: Lysozyme C (148 aa).

A signal peptide spans 1–18 (MRALIILGLVLLSVTVQG). The 130-residue stretch at 19 to 148 (KIFERCELAR…VSQYVKGCGV (130 aa)) folds into the C-type lysozyme domain. Cystine bridges form between cysteine 24–cysteine 146, cysteine 48–cysteine 134, cysteine 83–cysteine 99, and cysteine 95–cysteine 113. Catalysis depends on residues glutamate 53 and aspartate 71.

This sequence belongs to the glycosyl hydrolase 22 family. As to quaternary structure, monomer.

The protein localises to the secreted. It catalyses the reaction Hydrolysis of (1-&gt;4)-beta-linkages between N-acetylmuramic acid and N-acetyl-D-glucosamine residues in a peptidoglycan and between N-acetyl-D-glucosamine residues in chitodextrins.. Functionally, lysozymes have primarily a bacteriolytic function; those in tissues and body fluids are associated with the monocyte-macrophage system and enhance the activity of immunoagents. Also plays a role in digestion in this species. This Trachypithecus francoisi (Francois' leaf monkey) protein is Lysozyme C (LYZ).